Here is a 596-residue protein sequence, read N- to C-terminus: Arginine--tRNA ligase (596 aa).

A 'HIGH' region motif is present at residues 128 to 138 (ANPTSSLHVGH).

Belongs to the class-I aminoacyl-tRNA synthetase family. In terms of assembly, monomer.

It localises to the cytoplasm. It catalyses the reaction tRNA(Arg) + L-arginine + ATP = L-arginyl-tRNA(Arg) + AMP + diphosphate. The sequence is that of Arginine--tRNA ligase from Acinetobacter baylyi (strain ATCC 33305 / BD413 / ADP1).